Here is a 431-residue protein sequence, read N- to C-terminus: Asparagine--tRNA ligase 1 (431 aa).

Belongs to the class-II aminoacyl-tRNA synthetase family. In terms of assembly, homodimer.

Its subcellular location is the cytoplasm. It catalyses the reaction tRNA(Asn) + L-asparagine + ATP = L-asparaginyl-tRNA(Asn) + AMP + diphosphate + H(+). The polypeptide is Asparagine--tRNA ligase 1 (asnS1) (Lactiplantibacillus plantarum (strain ATCC BAA-793 / NCIMB 8826 / WCFS1) (Lactobacillus plantarum)).